We begin with the raw amino-acid sequence, 186 residues long: Adrenodoxin, mitochondrial (186 aa).

The N-terminal 58 residues, methionine 1–tryptophan 58, are a transit peptide targeting the mitochondrion. Serine 61 carries the post-translational modification Phosphoserine. Lysine 64 carries the N6-acetyllysine; alternate modification. Lysine 64 carries the post-translational modification N6-succinyllysine; alternate. In terms of domain architecture, 2Fe-2S ferredoxin-type spans isoleucine 65 to valine 169. The [2Fe-2S] cluster site is built by cysteine 104, cysteine 110, cysteine 113, and cysteine 150. N6-succinyllysine is present on lysine 156. Position 175 is a phosphoserine (serine 175).

Belongs to the adrenodoxin/putidaredoxin family. In terms of assembly, interacts with CYP11A1. [2Fe-2S] cluster serves as cofactor.

Its subcellular location is the mitochondrion matrix. Functionally, essential for the synthesis of various steroid hormones. Participates in the reduction of mitochondrial cytochrome P450 for steroidogenesis. Transfers electrons from adrenodoxin reductase to CYP11A1, a cytochrome P450 that catalyzes cholesterol side-chain cleavage. Does not form a ternary complex with adrenodoxin reductase and CYP11A1 but shuttles between the two enzymes to transfer electrons. This Sus scrofa (Pig) protein is Adrenodoxin, mitochondrial (FDX1).